The sequence spans 149 residues: Transcriptional repressor NrdR (149 aa).

A zinc finger spans residues cysteine 3–cysteine 34. Positions proline 49–glutamate 139 constitute an ATP-cone domain.

This sequence belongs to the NrdR family. Requires Zn(2+) as cofactor.

Its function is as follows. Negatively regulates transcription of bacterial ribonucleotide reductase nrd genes and operons by binding to NrdR-boxes. The protein is Transcriptional repressor NrdR of Sodalis glossinidius (strain morsitans).